We begin with the raw amino-acid sequence, 280 residues long: Dermonecrotic toxin LgSicTox-alphaIC1 (280 aa).

The active site involves His-12. The Mg(2+) site is built by Glu-32 and Asp-34. His-48 acts as the Nucleophile in catalysis. 2 cysteine pairs are disulfide-bonded: Cys-52–Cys-58 and Cys-54–Cys-197. Asp-92 is a binding site for Mg(2+).

The protein belongs to the arthropod phospholipase D family. Class II subfamily. Mg(2+) is required as a cofactor. Expressed by the venom gland.

The protein localises to the secreted. The enzyme catalyses an N-(acyl)-sphingosylphosphocholine = an N-(acyl)-sphingosyl-1,3-cyclic phosphate + choline. It carries out the reaction an N-(acyl)-sphingosylphosphoethanolamine = an N-(acyl)-sphingosyl-1,3-cyclic phosphate + ethanolamine. The catalysed reaction is a 1-acyl-sn-glycero-3-phosphocholine = a 1-acyl-sn-glycero-2,3-cyclic phosphate + choline. It catalyses the reaction a 1-acyl-sn-glycero-3-phosphoethanolamine = a 1-acyl-sn-glycero-2,3-cyclic phosphate + ethanolamine. Its function is as follows. Dermonecrotic toxins cleave the phosphodiester linkage between the phosphate and headgroup of certain phospholipids (sphingolipid and lysolipid substrates), forming an alcohol (often choline) and a cyclic phosphate. This toxin acts on sphingomyelin (SM) with high activity. It may also act on ceramide phosphoethanolamine (CPE), lysophosphatidylcholine (LPC) and lysophosphatidylethanolamine (LPE), but not on lysophosphatidylserine (LPS), and lysophosphatidylglycerol (LPG). It acts by transphosphatidylation, releasing exclusively cyclic phosphate products as second products. Induces platelet aggregation in platelet rich plasma, but not in washed platelet, indicating that this activity is dependent on plasma components. Also induces hemolysis. In vivo, the recombinant protein evokes an intense inflammatory reaction and dermonecrosis, similar to those induced by L.gaucho total venom. Is a good immunogen, capable of inducing immunoprotection in test animals. Functionally, anionic antimicrobial peptide that shows antimicrobial activity against Gram-negative bacteria (MIC=1.15-4.6 uM) (tested on E.coli, P.aeruginosa, and E.cloacae), but not on Gram-negative bacteria (M.luteus, S.aureus, and B.subtilis), neither on fungi and yeasts (A.niger, C.albicans and C.krusei). Does not show hemolytic effects against human erythrocytes, and has no cytotoxic effects against human cervical carcinoma cells (HeLa). This chain is Dermonecrotic toxin LgSicTox-alphaIC1, found in Loxosceles gaucho (Spider).